A 98-amino-acid chain; its full sequence is MACCAPLCCSARTSPATTICSSDKFCRCGVCLPSTCPHTVWLLEPTCCDNCPPPCHIPQPCVPTCFLLNSSQPTPGLETINLTTYTQPSCEPCIPSCC.

Alanine 2 is subject to N-acetylalanine. 3 repeat units span residues cysteine 3–leucine 7, cysteine 8–arginine 12, and cysteine 47–cysteine 51. A 3 X 5 AA repeats of C-C-X(3) region spans residues cysteine 3 to glutamine 59.

Belongs to the KRTAP type 3 family. In terms of assembly, interacts with hair keratins.

In terms of biological role, in the hair cortex, hair keratin intermediate filaments are embedded in an interfilamentous matrix, consisting of hair keratin-associated proteins (KRTAP), which are essential for the formation of a rigid and resistant hair shaft through their extensive disulfide bond cross-linking with abundant cysteine residues of hair keratins. The matrix proteins include the high-sulfur and high-glycine-tyrosine keratins. This chain is Keratin-associated protein 3-3, found in Bos taurus (Bovine).